Here is a 377-residue protein sequence, read N- to C-terminus: Prostaglandin E synthase 2 (377 aa).

The Lumenal segment spans residues 1 to 57 (MDPAARVVRALWPGGCALAWRLGGRPQPLLPTQSRAGFAGAAGGPSPVAAARKGSPR). Residues 58 to 74 (LLGAAALALGGALGLYH) traverse the membrane as a helical segment. Topologically, residues 75-377 (TARWHLRAQD…RAITEASPAH (303 aa)) are cytoplasmic. The Glutaredoxin domain maps to 90-193 (SAAQLSLSSR…EIITYYPAMK (104 aa)). Residue S95 is modified to Phosphoserine. Residues V148 and 164–165 (DS) each bind glutathione. One can recognise a GST C-terminal domain in the interval 263 to 377 (YIVREGKFGA…RAITEASPAH (115 aa)).

The protein belongs to the GST superfamily. Homodimer. May interact with CEBPB. Interacts with EXOSC10. In terms of processing, synthesized as a Golgi membrane-associated protein, and the proteolytic removal of the N-terminal hydrophobic domain leads to the formation of a mature cytosolic enzyme. In terms of tissue distribution, widely expressed. Expressed in the heart, including apex, inter-ventricular septum, both atria and ventricles, but not in the aorta. Also expressed in fetal heart. Detected in various regions of the brain: cerebellum; occipital, frontal and parietal lobes. Also expressed in the lymph nodes, skeletal muscle, kidney and trachea, but not in the thymus or lung. Overexpressed in colorectal cancer.

The protein resides in the golgi apparatus membrane. Its subcellular location is the cytoplasm. It is found in the perinuclear region. The catalysed reaction is prostaglandin H2 = prostaglandin E2. It carries out the reaction prostaglandin H2 = (12S)-hydroxy-(5Z,8E,10E)-heptadecatrienoate + malonaldehyde. The protein operates within lipid metabolism; prostaglandin biosynthesis. With respect to regulation, isomerase activity is increased by sulfhydril compounds. Dithiothreitol (DTT) is most effective, followed by dihydrolipoic acid, glutathione (GSH) and 2-mercaptoethanol. In terms of biological role, isomerase that catalyzes the conversion of PGH2 into the more stable prostaglandin E2 (PGE2) (in vitro). The biological function and the GSH-dependent property of PTGES2 is still under debate. In vivo, PTGES2 could form a complex with GSH and heme and would not participate in PGE2 synthesis but would catalyze the degradation of prostaglandin E2 H2 (PGH2) to 12(S)-hydroxy-5(Z),8(E),10(E)-heptadecatrienoic acid (HHT) and malondialdehyde (MDA). This is Prostaglandin E synthase 2 (PTGES2) from Homo sapiens (Human).